Consider the following 386-residue polypeptide: 3-ketoacyl-CoA thiolase (386 aa).

Cys91 functions as the Acyl-thioester intermediate in the catalytic mechanism. Catalysis depends on proton acceptor residues His342 and Cys372.

It belongs to the thiolase-like superfamily. Thiolase family. Heterotetramer of two alpha chains (FadB) and two beta chains (FadA).

It localises to the cytoplasm. The enzyme catalyses an acyl-CoA + acetyl-CoA = a 3-oxoacyl-CoA + CoA. Its pathway is lipid metabolism; fatty acid beta-oxidation. Its function is as follows. Catalyzes the final step of fatty acid oxidation in which acetyl-CoA is released and the CoA ester of a fatty acid two carbons shorter is formed. The sequence is that of 3-ketoacyl-CoA thiolase from Colwellia psychrerythraea (strain 34H / ATCC BAA-681) (Vibrio psychroerythus).